The primary structure comprises 553 residues: Putative transport protein YidE (553 aa).

5 consecutive transmembrane segments (helical) span residues 4–24 (IALT…IGNV), 28–48 (GIGL…HFVS), 65–85 (FGLI…FFAS), 95–115 (LFAV…HKLF), and 158–178 (MSYA…MWML). RCK C-terminal domains follow at residues 191–276 (QQHE…VIGQ) and 279–361 (DTSL…VLGN). 6 helical membrane passes run 371-391 (MLPV…PVFV), 393-413 (GFPA…ALIL), 439-459 (IVLF…NTLV), 464-484 (LSWI…VGIL), 493-513 (YLTM…LAFA), and 533-553 (LVMF…WSIG).

This sequence belongs to the AAE transporter (TC 2.A.81) family. YidE subfamily.

It localises to the cell membrane. The sequence is that of Putative transport protein YidE from Escherichia coli O7:K1 (strain IAI39 / ExPEC).